The following is a 430-amino-acid chain: Glutamyl-tRNA reductase 1 (430 aa).

Substrate-binding positions include 49-52 (TCNR), Ser-109, 114-116 (EGQ), and Gln-120. The active-site Nucleophile is the Cys-50. Residue 189–194 (GAGSMA) coordinates NADP(+).

The protein belongs to the glutamyl-tRNA reductase family. Homodimer.

It catalyses the reaction (S)-4-amino-5-oxopentanoate + tRNA(Glu) + NADP(+) = L-glutamyl-tRNA(Glu) + NADPH + H(+). It functions in the pathway porphyrin-containing compound metabolism; protoporphyrin-IX biosynthesis; 5-aminolevulinate from L-glutamyl-tRNA(Glu): step 1/2. Its function is as follows. Catalyzes the NADPH-dependent reduction of glutamyl-tRNA(Glu) to glutamate 1-semialdehyde (GSA). The protein is Glutamyl-tRNA reductase 1 of Nocardioides sp. (strain ATCC BAA-499 / JS614).